Consider the following 239-residue polypeptide: Ribonuclease PH (239 aa).

Phosphate is bound by residues R87 and 125–127 (GTR).

The protein belongs to the RNase PH family. In terms of assembly, homohexameric ring arranged as a trimer of dimers.

The enzyme catalyses tRNA(n+1) + phosphate = tRNA(n) + a ribonucleoside 5'-diphosphate. Functionally, phosphorolytic 3'-5' exoribonuclease that plays an important role in tRNA 3'-end maturation. Removes nucleotide residues following the 3'-CCA terminus of tRNAs; can also add nucleotides to the ends of RNA molecules by using nucleoside diphosphates as substrates, but this may not be physiologically important. Probably plays a role in initiation of 16S rRNA degradation (leading to ribosome degradation) during starvation. This chain is Ribonuclease PH, found in Saccharophagus degradans (strain 2-40 / ATCC 43961 / DSM 17024).